The primary structure comprises 517 residues: Protein MGF 505-2R (517 aa).

It belongs to the asfivirus MGF 505 family.

In terms of biological role, plays a role in virus cell tropism, and may be required for efficient virus replication in macrophages. In African swine fever virus (isolate Warthog/Namibia/Wart80/1980) (ASFV), this protein is Protein MGF 505-2R.